We begin with the raw amino-acid sequence, 408 residues long: Phosphoglycerate kinase (408 aa).

Residues aspartate 24 to asparagine 26, arginine 39, histidine 62 to arginine 65, arginine 121, and arginine 161 contribute to the substrate site. ATP-binding positions include lysine 211, glycine 307, glutamate 338, and glycine 364 to serine 367.

This sequence belongs to the phosphoglycerate kinase family. Monomer.

It is found in the cytoplasm. It carries out the reaction (2R)-3-phosphoglycerate + ATP = (2R)-3-phospho-glyceroyl phosphate + ADP. It functions in the pathway carbohydrate degradation; glycolysis; pyruvate from D-glyceraldehyde 3-phosphate: step 2/5. This is Phosphoglycerate kinase from Paenarthrobacter aurescens (strain TC1).